Reading from the N-terminus, the 427-residue chain is Serine--tRNA ligase (427 aa).

An L-serine-binding site is contributed by 235 to 237; the sequence is TSE. 266-268 is an ATP binding site; it reads RSE. Residue Glu-289 participates in L-serine binding. Residue 353–356 coordinates ATP; the sequence is EISS. Position 388 (Ser-388) interacts with L-serine.

Belongs to the class-II aminoacyl-tRNA synthetase family. Type-1 seryl-tRNA synthetase subfamily. As to quaternary structure, homodimer. The tRNA molecule binds across the dimer.

The protein resides in the cytoplasm. It carries out the reaction tRNA(Ser) + L-serine + ATP = L-seryl-tRNA(Ser) + AMP + diphosphate + H(+). It catalyses the reaction tRNA(Sec) + L-serine + ATP = L-seryl-tRNA(Sec) + AMP + diphosphate + H(+). The protein operates within aminoacyl-tRNA biosynthesis; selenocysteinyl-tRNA(Sec) biosynthesis; L-seryl-tRNA(Sec) from L-serine and tRNA(Sec): step 1/1. Catalyzes the attachment of serine to tRNA(Ser). Is also able to aminoacylate tRNA(Sec) with serine, to form the misacylated tRNA L-seryl-tRNA(Sec), which will be further converted into selenocysteinyl-tRNA(Sec). The chain is Serine--tRNA ligase from Chromobacterium violaceum (strain ATCC 12472 / DSM 30191 / JCM 1249 / CCUG 213 / NBRC 12614 / NCIMB 9131 / NCTC 9757 / MK).